Reading from the N-terminus, the 642-residue chain is Threonine--tRNA ligase (642 aa).

A TGS domain is found at 1 to 61 (MPIITLPDGS…EEDASLEIIT (61 aa)). Residues 244–535 (DHRKIGKQLD…LIEEYAGFFP (292 aa)) are catalytic. 3 residues coordinate Zn(2+): C335, H386, and H512.

The protein belongs to the class-II aminoacyl-tRNA synthetase family. Homodimer. Requires Zn(2+) as cofactor.

It is found in the cytoplasm. The catalysed reaction is tRNA(Thr) + L-threonine + ATP = L-threonyl-tRNA(Thr) + AMP + diphosphate + H(+). In terms of biological role, catalyzes the attachment of threonine to tRNA(Thr) in a two-step reaction: L-threonine is first activated by ATP to form Thr-AMP and then transferred to the acceptor end of tRNA(Thr). Also edits incorrectly charged L-seryl-tRNA(Thr). This is Threonine--tRNA ligase from Vibrio vulnificus (strain YJ016).